Consider the following 54-residue polypeptide: Low temperature-induced protein lt101.2 (54 aa).

2 helical membrane-spanning segments follow: residues 2–22 (ASAT…GVFL) and 34–54 (LLLT…VLVA).

It belongs to the UPF0057 (PMP3) family.

It localises to the membrane. This chain is Low temperature-induced protein lt101.2 (LT101.2), found in Hordeum vulgare (Barley).